Here is a 1591-residue protein sequence, read N- to C-terminus: Rho guanine nucleotide exchange factor TIAM1 (1591 aa).

The disordered stretch occupies residues 1 to 70 (MGNAESQNVD…TPSIPQSLAE (70 aa)). A lipid anchor (N-myristoyl glycine) is attached at glycine 2. Basic and acidic residues predominate over residues 8-19 (NVDHEFYGEKHA). Residues 20 to 49 (SLGRKHTSRSLRLSHKTRRTRHASSGKAIH) are compositionally biased toward basic residues. A compositionally biased stretch (low complexity) spans 53–67 (EVSTRSSSTPSIPQS). 3 positions are modified to phosphoserine: serine 231, serine 356, and serine 358. Disordered stretches follow at residues 305–380 (QISL…DRAR) and 393–422 (MSTTNSESLEEAGSAHSDEQSSGTLSSPGQ). The segment covering 340–359 (TTDTDLLSRRSNATNSSYSP) has biased composition (polar residues). Low complexity predominate over residues 367–376 (GSDSGSSSTG). Over residues 412 to 422 (QSSGTLSSPGQ) the composition is skewed to polar residues. The PH 1 domain maps to 434-549 (VRKAGALAVK…TAIHSACAAA (116 aa)). Serine 695 bears the Phosphoserine mark. Positions 765-832 (TPSWFCLPNN…QPEEDIYELL (68 aa)) constitute an RBD domain. Tyrosine 829 carries the post-translational modification Phosphotyrosine; by NTRK2. The 64-residue stretch at 845–908 (NIHIEKSDAA…NNRAAGTLNS (64 aa)) folds into the PDZ domain. Positions 933–1034 (GVELLENPPH…TSPQLATTRQ (102 aa)) are disordered. Polar residues predominate over residues 958–975 (LTSNPGHSLSSEQGSSAE). The span at 977–990 (APEEGEGPDLESSD) shows a compositional bias: acidic residues. Over residues 1014 to 1028 (PSDSSPSPQDATSPQ) the composition is skewed to low complexity. The DH domain maps to 1040-1234 (KLRKVICELL…NKVASHINEM (195 aa)). The region spanning 1261–1397 (DLSMGDLLLH…KSVHSILRDK (137 aa)) is the PH 2 domain. Tyrosine 1323 carries the phosphotyrosine modification. Glycyl lysine isopeptide (Lys-Gly) (interchain with G-Cter in ubiquitin) cross-links involve residues lysine 1404 and lysine 1420. Positions 1456–1481 (TIDSDAISASSPEKEPQQPAGGGDTD) are disordered. Serine 1519 carries the phosphoserine modification.

The protein belongs to the TIAM family. In terms of assembly, component of the Par polarity complex, composed of at least phosphorylated PRKCZ, PARD3 and TIAM1. Interacts with BAIAP2. Interacts (via PDZ domain) with CNTNAP4, SDC1 and SDC3 (via C-terminus). Interacts with CD44, PARD3 and MAPK8IP2. Interacts with EPHA8; regulates clathrin-mediated endocytosis of EPHA8. Interacts with NTRK2; mediates the activation of RAC1 by BDNF. Ubiquitinated. Undergoes 'Lys-48' ubiquitination at Lys-1404 and Lys-1420 by a CUL3(KBTBD6/7) E3 ubiquitin ligase complex composed of CUL3, RBX1, KBTBD6 and KBTBD7. 'Lys-48' ubiquitination at Lys-1404 and Lys-1420 triggers proteasomal degradation. Ubiquitination at Lys-1404 and Lys-1420 by CUL3(KBTBD6/7) also requires the membrane-associated protein GABARAP and may therefore be spatially restricted within the cell. As to expression, highly expressed in brain and testis and at low or moderate levels in almost all other normal tissues. Found in virtually all analyzed tumor cell lines including B- and T-lymphomas, neuroblastomas, melanomas and carcinomas.

It is found in the cell junction. The protein resides in the cell membrane. Guanyl-nucleotide exchange factor that activates RHO-like proteins and connects extracellular signals to cytoskeletal activities. Activates RAC1, CDC42, and to a lesser extent RHOA and their downstream signaling to regulate processes like cell adhesion and cell migration. The sequence is that of Rho guanine nucleotide exchange factor TIAM1 from Mus musculus (Mouse).